The sequence spans 343 residues: Cytoplasmic tRNA 2-thiolation protein 1 (343 aa).

It belongs to the TtcA family. CTU1/NCS6/ATPBD3 subfamily.

Its subcellular location is the cytoplasm. It functions in the pathway tRNA modification; 5-methoxycarbonylmethyl-2-thiouridine-tRNA biosynthesis. Plays a central role in 2-thiolation of mcm(5)S(2)U at tRNA wobble positions of tRNA(Lys), tRNA(Glu) and tRNA(Gln). Directly binds tRNAs and probably acts by catalyzing adenylation of tRNAs, an intermediate required for 2-thiolation. It is unclear whether it acts as a sulfurtransferase that transfers sulfur from thiocarboxylated URM1 onto the uridine of tRNAs at wobble position. The protein is Cytoplasmic tRNA 2-thiolation protein 1 of Drosophila melanogaster (Fruit fly).